Here is a 144-residue protein sequence, read N- to C-terminus: 3-dehydroquinate dehydratase (144 aa).

Residue Y22 is the Proton acceptor of the active site. Substrate contacts are provided by N73, H79, and D86. Residue H99 is the Proton donor of the active site. Substrate-binding positions include 100-101 (IS) and R110.

This sequence belongs to the type-II 3-dehydroquinase family. Homododecamer.

It catalyses the reaction 3-dehydroquinate = 3-dehydroshikimate + H2O. It participates in metabolic intermediate biosynthesis; chorismate biosynthesis; chorismate from D-erythrose 4-phosphate and phosphoenolpyruvate: step 3/7. Catalyzes a trans-dehydration via an enolate intermediate. This is 3-dehydroquinate dehydratase from Clostridium acetobutylicum (strain ATCC 824 / DSM 792 / JCM 1419 / IAM 19013 / LMG 5710 / NBRC 13948 / NRRL B-527 / VKM B-1787 / 2291 / W).